Reading from the N-terminus, the 660-residue chain is E3 ubiquitin-protein ligase ORTHRUS 3 (660 aa).

The PHD-type zinc finger occupies 12 to 63 (EGVCMRCKSMPPPEESLTCGTCVTPWHVSCLLSPPETLSATLQWLCPDCSGE). Residues 107 to 129 (QLLSGKGVVDEDDEEEKKKTSKG) are disordered. The segment at 141–197 (CSFCMQSLQKPVSVRVLFALALMLVWFLESTPCGHNACLKCFLKWMGQGHRSCGTCR) adopts an RING-type 1 zinc-finger fold. In terms of domain architecture, YDG spans 285 to 434 (VRNQGLLVGE…CRFLFVRCDN (150 aa)). The segment at 528 to 585 (CQICQKVMTNPVTTPCAHNFCKACLESKFAGTALVRERGSGGRKLRSQKSVMKCPCCP) adopts an RING-type 2 zinc-finger fold. A coiled-coil region spans residues 593 to 622 (QNPQVNREVAEVIEKLKKQEEEENAKSLDE). Composition is skewed to basic and acidic residues over residues 610–621 (KQEEEENAKSLD) and 637–646 (QPKKRIKLDT). The segment at 610-660 (KQEEEENAKSLDEGQCSGTSHEEEDDEQPKKRIKLDTDAEVSATVVESDMK) is disordered.

Its subcellular location is the nucleus. The enzyme catalyses S-ubiquitinyl-[E2 ubiquitin-conjugating enzyme]-L-cysteine + [acceptor protein]-L-lysine = [E2 ubiquitin-conjugating enzyme]-L-cysteine + N(6)-ubiquitinyl-[acceptor protein]-L-lysine.. Its pathway is protein modification; protein ubiquitination. Its function is as follows. E3 ubiquitin-protein ligase. May participate in CpG methylation-dependent transcriptional regulation. This Arabidopsis thaliana (Mouse-ear cress) protein is E3 ubiquitin-protein ligase ORTHRUS 3 (ORTH3).